Here is a 169-residue protein sequence, read N- to C-terminus: UPF0251 protein MM_2090 (169 aa).

Belongs to the UPF0251 family.

The protein is UPF0251 protein MM_2090 of Methanosarcina mazei (strain ATCC BAA-159 / DSM 3647 / Goe1 / Go1 / JCM 11833 / OCM 88) (Methanosarcina frisia).